The chain runs to 138 residues: Small ribosomal subunit protein uS11c (138 aa).

The segment at 1–24 (MIKPIPRISSRRNGRIGSRKTGRR) is disordered. Residues 9–24 (SSRRNGRIGSRKTGRR) are compositionally biased toward basic residues.

It belongs to the universal ribosomal protein uS11 family. In terms of assembly, part of the 30S ribosomal subunit.

The protein resides in the plastid. Its subcellular location is the chloroplast. The sequence is that of Small ribosomal subunit protein uS11c from Lemna minor (Common duckweed).